We begin with the raw amino-acid sequence, 518 residues long: Cytochrome P450 monooxygenase psoD (518 aa).

Heme is bound at residue Cys-442.

It belongs to the cytochrome P450 family. Requires heme as cofactor.

Its pathway is secondary metabolite biosynthesis. Cytochrome P450 monooxygenase; part of the gene cluster that mediates the biosynthesis of pseurotin A, a competitive inhibitor of chitin synthase and an inducer of nerve-cell proliferation. The PKS-NRPS hybrid synthetase psoA is responsible for the biosynthesis of azaspirene, one of the first intermediates having the 1-oxa-7-azaspiro[4,4]-non-2-ene-4,6-dione core of pseurotin, via condensation of one acetyl-CoA, 4 malonyl-CoA, and a L-phenylalanine molecule. The dual-functional monooxygenase/methyltransferase psoF seems to be involved in the addition of the C3 methyl group onto the pseurotin scaffold. Azaspirene is then converted to synerazol through 4 steps including oxidation of C17 by the cytochrome P450 monooxygenase psoD, O-methylation of the hydroxy group of C8 by the methyltransferase psoC, and the trans-to-cis isomerization of the C13 olefin by the glutathione S-transferase psoE. The fourth step of synerazol production is performed by the dual-functional monooxygenase/methyltransferase psoF which seems to catalyze the epoxidation of the intermediate deepoxy-synerazol. Synerazol can be attacked by a water molecule nonenzymatically at two different positions to yield two diol products, pseurotin A and pseurotin D. The chain is Cytochrome P450 monooxygenase psoD from Aspergillus fumigatus (strain ATCC MYA-4609 / CBS 101355 / FGSC A1100 / Af293) (Neosartorya fumigata).